A 401-amino-acid chain; its full sequence is Rho-N domain-containing protein 1, chloroplastic (401 aa).

Residues 1 to 63 constitute a chloroplast transit peptide; it reads MAMSGTFHLT…VPNRSSFVCR (63 aa). Disordered stretches follow at residues 73-129 and 180-361; these read PDFS…PGPR and KHSG…EEAV. Composition is skewed to polar residues over residues 102–126, 210–223, and 240–265; these read DMLS…TSSP, TGNL…DNNA, and PRSQ…VTWT. Residues 266 to 290 show a composition bias toward basic and acidic residues; it reads QKKDTVELHDEPEHEPAYEHEHEPE. A compositionally biased stretch (acidic residues) spans 339–358; the sequence is LSDDDESLDDADEDSDEAEE. A coiled-coil region spans residues 339–371; that stretch reads LSDDDESLDDADEDSDEAEEEAVKDLSELKLVE.

In terms of assembly, homodimer or homomultimer. Part of a chloroplastic degradosome-like complex. Interacts with RNE.

The protein localises to the plastid. It localises to the chloroplast. Binds to and supports processing of specific plastid RNAs. Associates via its C-terminal Rho-N domain to single stranded regions of 16S and 23S rRNAs or to rbcL mRNAs. May be involved in targeting transcripts to RNases such as RNE or RNase J. The sequence is that of Rho-N domain-containing protein 1, chloroplastic (RHON1) from Arabidopsis thaliana (Mouse-ear cress).